A 354-amino-acid chain; its full sequence is Cellular communication network factor 6 (354 aa).

The first 23 residues, 1 to 23 (MQGLLFSTLLLAGLAQFCCRVQG), serve as a signal peptide directing secretion. The IGFBP N-terminal domain maps to 44-117 (RKQFCHWPCK…RYETGVCAYL (74 aa)). 6 disulfide bridges follow: C48–C72, C52–C74, C54–C75, C61–C78, C86–C100, and C92–C114. N178 carries N-linked (GlcNAc...) asparagine glycosylation. Residues 208–253 (KCLVQATKWTPCSRTCGMGISNRVTNENSNCEMRKEKRLCYIQPCD) enclose the TSP type-1 domain. Intrachain disulfides connect C268–C305, C285–C319, C296–C335, C299–C337, and C304–C341. Residues 268–342 (CQPTFQLSKA…TSCVCQRNCR (75 aa)) enclose the CTCK domain. N308 carries N-linked (GlcNAc...) asparagine glycosylation.

This sequence belongs to the CCN family. In terms of tissue distribution, predominant expression in adult kidney and testis and fetal kidney. Weaker expression found in placenta, ovary, prostate and small intestine. Also expressed in skeletally-derived cells such as synoviocytes and articular cartilage chondrocytes.

The protein localises to the secreted. It is found in the mitochondrion. Plays a role in mitochondrial electron transport and mitochondrial respiration. Through its regulation of the mitochondrial function may play a role in normal postnatal skeletal growth and cartilage homeostasis. The polypeptide is Cellular communication network factor 6 (Homo sapiens (Human)).